Consider the following 465-residue polypeptide: Ribulose bisphosphate carboxylase large chain (465 aa).

Residue lysine 4 is modified to N6,N6,N6-trimethyllysine. The substrate site is built by asparagine 113 and threonine 163. The active-site Proton acceptor is the lysine 165. Residue lysine 167 coordinates substrate. 3 residues coordinate Mg(2+): lysine 191, aspartate 193, and glutamate 194. The residue at position 191 (lysine 191) is an N6-carboxylysine. Histidine 284 functions as the Proton acceptor in the catalytic mechanism. Positions 285, 317, and 369 each coordinate substrate.

It belongs to the RuBisCO large chain family. Type I subfamily. In terms of assembly, heterohexadecamer of 8 large chains and 8 small chains; disulfide-linked. The disulfide link is formed within the large subunit homodimers. Mg(2+) serves as cofactor. The disulfide bond which can form in the large chain dimeric partners within the hexadecamer appears to be associated with oxidative stress and protein turnover.

Its subcellular location is the plastid. The protein resides in the chloroplast. It catalyses the reaction 2 (2R)-3-phosphoglycerate + 2 H(+) = D-ribulose 1,5-bisphosphate + CO2 + H2O. It carries out the reaction D-ribulose 1,5-bisphosphate + O2 = 2-phosphoglycolate + (2R)-3-phosphoglycerate + 2 H(+). RuBisCO catalyzes two reactions: the carboxylation of D-ribulose 1,5-bisphosphate, the primary event in carbon dioxide fixation, as well as the oxidative fragmentation of the pentose substrate in the photorespiration process. Both reactions occur simultaneously and in competition at the same active site. This chain is Ribulose bisphosphate carboxylase large chain, found in Humiria balsamifera (Tauroniro).